The primary structure comprises 103 residues: Integration host factor subunit alpha (103 aa).

The segment at 50–72 (GNFNLRDKGERPGRNPKTGEEIP) is disordered. Basic and acidic residues predominate over residues 54–69 (LRDKGERPGRNPKTGE).

Belongs to the bacterial histone-like protein family. Heterodimer of an alpha and a beta chain.

In terms of biological role, this protein is one of the two subunits of integration host factor, a specific DNA-binding protein that functions in genetic recombination as well as in transcriptional and translational control. The sequence is that of Integration host factor subunit alpha from Coxiella burnetii (strain CbuK_Q154) (Coxiella burnetii (strain Q154)).